A 364-amino-acid chain; its full sequence is 3-isopropylmalate dehydrogenase (364 aa).

79 to 92 (GPKWNNINETSRPE) contacts NAD(+). Positions 100, 110, 139, and 228 each coordinate substrate. Positions 228, 252, and 256 each coordinate Mg(2+). An NAD(+)-binding site is contributed by 286–298 (GSAPDIAGKNIAN).

Belongs to the isocitrate and isopropylmalate dehydrogenases family. LeuB type 1 subfamily. In terms of assembly, homodimer. The cofactor is Mg(2+). It depends on Mn(2+) as a cofactor.

The protein localises to the cytoplasm. The catalysed reaction is (2R,3S)-3-isopropylmalate + NAD(+) = 4-methyl-2-oxopentanoate + CO2 + NADH. Its pathway is amino-acid biosynthesis; L-leucine biosynthesis; L-leucine from 3-methyl-2-oxobutanoate: step 3/4. Its function is as follows. Catalyzes the oxidation of 3-carboxy-2-hydroxy-4-methylpentanoate (3-isopropylmalate) to 3-carboxy-4-methyl-2-oxopentanoate. The product decarboxylates to 4-methyl-2 oxopentanoate. This chain is 3-isopropylmalate dehydrogenase, found in Blochmanniella floridana.